The sequence spans 297 residues: tRNA-cytidine(32) 2-sulfurtransferase (297 aa).

A PP-loop motif motif is present at residues 45–50; that stretch reads SGGKDS. The [4Fe-4S] cluster site is built by Cys-120, Cys-123, and Cys-211.

This sequence belongs to the TtcA family. As to quaternary structure, homodimer. It depends on Mg(2+) as a cofactor. [4Fe-4S] cluster is required as a cofactor.

Its subcellular location is the cytoplasm. The catalysed reaction is cytidine(32) in tRNA + S-sulfanyl-L-cysteinyl-[cysteine desulfurase] + AH2 + ATP = 2-thiocytidine(32) in tRNA + L-cysteinyl-[cysteine desulfurase] + A + AMP + diphosphate + H(+). The protein operates within tRNA modification. In terms of biological role, catalyzes the ATP-dependent 2-thiolation of cytidine in position 32 of tRNA, to form 2-thiocytidine (s(2)C32). The sulfur atoms are provided by the cysteine/cysteine desulfurase (IscS) system. The sequence is that of tRNA-cytidine(32) 2-sulfurtransferase from Vibrio parahaemolyticus serotype O3:K6 (strain RIMD 2210633).